We begin with the raw amino-acid sequence, 2078 residues long: Autophagy-related protein 2 homolog B (2078 aa).

The region spanning 13–108 (ACRYLLQRYL…EMVFRPRPRP (96 aa)) is the Chorein N-terminal domain. 2 positions are modified to phosphoserine: Ser-255 and Ser-379. The segment at 473 to 495 (GSTFPSNLVHPTPLQKTSLPSRS) is disordered. Residues 486–495 (LQKTSLPSRS) are compositionally biased toward polar residues. Phosphoserine is present on residues Ser-497, Ser-840, Ser-886, Ser-899, and Ser-1008. The interval 868 to 888 (EEEENDGHYQEEEEGGAHSLK) is disordered. Residues 873–888 (DGHYQEEEEGGAHSLK) are compositionally biased toward basic and acidic residues. At Tyr-1012 the chain carries Phosphotyrosine. Residues Ser-1016 and Ser-1018 each carry the phosphoserine modification. The residue at position 1022 (Thr-1022) is a Phosphothreonine. Residues 1375 to 1405 (ADMKPGAFQRRSKVDSSGRSSSRGPVLPEAD) form a disordered region. The residue at position 1526 (Ser-1526) is a Phosphoserine.

This sequence belongs to the ATG2 family. In terms of assembly, interacts with WDR45/WIPI4.

The protein resides in the preautophagosomal structure membrane. Its subcellular location is the lipid droplet. It is found in the endoplasmic reticulum membrane. It catalyses the reaction a 1,2-diacyl-sn-glycero-3-phospho-L-serine(in) = a 1,2-diacyl-sn-glycero-3-phospho-L-serine(out). The catalysed reaction is a 1,2-diacyl-sn-glycero-3-phosphoethanolamine(in) = a 1,2-diacyl-sn-glycero-3-phosphoethanolamine(out). Its function is as follows. Lipid transfer protein required for both autophagosome formation and regulation of lipid droplet morphology and dispersion. Tethers the edge of the isolation membrane (IM) to the endoplasmic reticulum (ER) and mediates direct lipid transfer from ER to IM for IM expansion. Binds to the ER exit site (ERES), which is the membrane source for autophagosome formation, and extracts phospholipids from the membrane source and transfers them to ATG9 (ATG9A or ATG9B) to the IM for membrane expansion. Lipid transfer activity is enhanced by WDR45/WIPI4, which promotes ATG2B-association with phosphatidylinositol 3-monophosphate (PI3P)-containing membranes. This is Autophagy-related protein 2 homolog B from Homo sapiens (Human).